The chain runs to 523 residues: Cytoplasmic dynein 1 light intermediate chain 1 (523 aa).

The interval 1–25 (MAAVGRVGSFGSSPPGLASTYASGP) is disordered. 74–81 (GEDGAGKT) serves as a coordination point for ATP. Disordered regions lie at residues 200-219 (PGED…QEDR), 387-434 (PPTA…DPNM), and 457-523 (GSPG…GEAS). Serine 207 carries the phosphoserine modification. Threonine 213 carries the phosphothreonine modification. Phosphoserine is present on residues serine 398 and serine 405. Threonine 408 is subject to Phosphothreonine. Phosphoserine is present on residues serine 412, serine 419, serine 421, and serine 427. Residues 412–421 (SVSSNVASVS) show a composition bias toward low complexity. Positions 458-473 (SPGGPGVGGSPGGGAA) are enriched in gly residues. The span at 474-485 (GASPSLPPSAKK) shows a compositional bias: low complexity. Serine 486 and serine 510 each carry phosphoserine. Residues 506–523 (PASVSPTTPTSPTEGEAS) are compositionally biased toward low complexity. Threonine 512, threonine 513, and threonine 515 each carry phosphothreonine. Position 516 is a phosphoserine (serine 516).

This sequence belongs to the dynein light intermediate chain family. As to quaternary structure, homodimer. The cytoplasmic dynein 1 complex consists of two catalytic heavy chains (HCs) and a number of non-catalytic subunits presented by intermediate chains (ICs), light intermediate chains (LICs) and light chains (LCs); the composition seems to vary in respect to the IC, LIC and LC composition. The heavy chain homodimer serves as a scaffold for the probable homodimeric assembly of the respective non-catalytic subunits. The ICs and LICs bind directly to the HC dimer and the LCs assemble on the IC dimer. Self-associates. Interacts with DYNC1H1; DYNC1LI1 and DYNC1LI2 bind mutually exclusive to DYNC1H1. Interacts with PCNT. Forms a complex with RAB11FIP3 and RAB11A1; the interaction between DYNC1LI1 and RAB11FIP3 is direct and induces DYNC1LI1 localization onto endosomal membrane; the complex regulates endocytic trafficking. Interacts with RUFY3. In terms of processing, phosphorylated during mitosis but not in interphase.

The protein resides in the cytoplasm. It is found in the chromosome. The protein localises to the centromere. Its subcellular location is the kinetochore. It localises to the cytoskeleton. The protein resides in the spindle pole. It is found in the recycling endosome membrane. Its function is as follows. Acts as one of several non-catalytic accessory components of the cytoplasmic dynein 1 complex that are thought to be involved in linking dynein to cargos and to adapter proteins that regulate dynein function. Cytoplasmic dynein 1 acts as a motor for the intracellular retrograde motility of vesicles and organelles along microtubules. May play a role in binding dynein to membranous organelles or chromosomes. Probably involved in the microtubule-dependent transport of pericentrin. Is required for progress through the spindle assembly checkpoint. The phosphorylated form appears to be involved in the selective removal of MAD1L1 and MAD1L2 but not BUB1B from kinetochores. Forms a functional Rab11/RAB11FIP3/dynein complex onto endosomal membrane that regulates the movement of peripheral sorting endosomes (SE) along microtubule tracks toward the microtubule organizing center/centrosome, generating the endosomal recycling compartment (ERC). This Mus musculus (Mouse) protein is Cytoplasmic dynein 1 light intermediate chain 1 (Dync1li1).